A 282-amino-acid polypeptide reads, in one-letter code: Nucleotide-binding protein XAC2976 (282 aa).

Position 5 to 12 (5 to 12 (GLSGSGKS)) interacts with ATP. Position 57–60 (57–60 (DVRS)) interacts with GTP.

It belongs to the RapZ-like family.

Displays ATPase and GTPase activities. The sequence is that of Nucleotide-binding protein XAC2976 from Xanthomonas axonopodis pv. citri (strain 306).